A 289-amino-acid polypeptide reads, in one-letter code: Enoyl-CoA delta isomerase 1, mitochondrial (289 aa).

The N-terminal 28 residues, 1–28, are a transit peptide targeting the mitochondrion; the sequence is MALAAARRVLLQAGSRLGRRGAVDGARR. K48 carries the N6-acetyllysine; alternate modification. K48 carries the N6-succinyllysine; alternate modification. K71 is subject to N6-succinyllysine. The residue at position 76 (K76) is an N6-acetyllysine. Substrate contacts are provided by residues 93–97, G140, and N164; that span reads AGLDL. An N6-acetyllysine; alternate mark is found at K222, K229, and K255. An N6-succinyllysine; alternate mark is found at K222, K229, and K255. K275 is modified (N6-succinyllysine). At K283 the chain carries N6-acetyllysine; alternate. At K283 the chain carries N6-succinyllysine; alternate.

The protein belongs to the enoyl-CoA hydratase/isomerase family. Homotrimer.

The protein resides in the mitochondrion matrix. It catalyses the reaction a (3Z)-enoyl-CoA = a 4-saturated (2E)-enoyl-CoA. The catalysed reaction is a (3E)-enoyl-CoA = a 4-saturated (2E)-enoyl-CoA. The enzyme catalyses (3Z)-octenoyl-CoA = (2E)-octenoyl-CoA. It carries out the reaction (2E)-tetradecenoyl-CoA = (3Z)-tetradecenoyl-CoA. It catalyses the reaction (3Z)-dodecenoyl-CoA = (2E)-dodecenoyl-CoA. The catalysed reaction is (3Z)-hexenoyl-CoA = (2E)-hexenoyl-CoA. The enzyme catalyses (3Z)-decenoyl-CoA = (2E)-decenoyl-CoA. It participates in lipid metabolism; fatty acid beta-oxidation. Functionally, key enzyme of fatty acid beta-oxidation. Able to isomerize both 3-cis (3Z) and 3-trans (3E) double bonds into the 2-trans (2E) form in a range of enoyl-CoA species, with a preference for (3Z)-enoyl-CoAs over (3E)-enoyl-CoAs. The catalytic efficiency of this enzyme is not affected by the fatty acyl chain length. The chain is Enoyl-CoA delta isomerase 1, mitochondrial from Rattus norvegicus (Rat).